A 225-amino-acid polypeptide reads, in one-letter code: NAD(P)H-quinone oxidoreductase subunit K, chloroplastic (225 aa).

4 residues coordinate [4Fe-4S] cluster: Cys-43, Cys-44, Cys-108, and Cys-139.

It belongs to the complex I 20 kDa subunit family. As to quaternary structure, NDH is composed of at least 16 different subunits, 5 of which are encoded in the nucleus. [4Fe-4S] cluster serves as cofactor.

Its subcellular location is the plastid. The protein resides in the chloroplast thylakoid membrane. The enzyme catalyses a plastoquinone + NADH + (n+1) H(+)(in) = a plastoquinol + NAD(+) + n H(+)(out). It carries out the reaction a plastoquinone + NADPH + (n+1) H(+)(in) = a plastoquinol + NADP(+) + n H(+)(out). Functionally, NDH shuttles electrons from NAD(P)H:plastoquinone, via FMN and iron-sulfur (Fe-S) centers, to quinones in the photosynthetic chain and possibly in a chloroplast respiratory chain. The immediate electron acceptor for the enzyme in this species is believed to be plastoquinone. Couples the redox reaction to proton translocation, and thus conserves the redox energy in a proton gradient. The polypeptide is NAD(P)H-quinone oxidoreductase subunit K, chloroplastic (Brachypodium distachyon (Purple false brome)).